A 379-amino-acid chain; its full sequence is Gonadotropin-releasing hormone II receptor (379 aa).

At 1 to 45 (MSGNTTLLLSNPTNVLDNSSVLNVSVSPPVLKWETPTFTTAARFR) the chain is on the extracellular side. N-linked (GlcNAc...) asparagine glycosylation is found at asparagine 4, asparagine 18, and asparagine 23. A helical membrane pass occupies residues 46–65 (VAATLVLFVFAAASNLSVLL). The Cytoplasmic portion of the chain corresponds to 66–80 (SVTRGRGRRLASHLR). Residues 81–100 (PLIASLASADLVMTFVVMPL) traverse the membrane as a helical segment. The Extracellular portion of the chain corresponds to 101-118 (DAVWNVTVQWYAGDAMCK). Asparagine 105 is a glycosylation site (N-linked (GlcNAc...) asparagine). Cysteines 117 and 194 form a disulfide. A helical transmembrane segment spans residues 119 to 140 (LMCFLKLFAMHSAAFILVVVSL). The Cytoplasmic portion of the chain corresponds to 141–167 (DRHHAILHPLDTLDAGRRNRRMLLTAW). The helical transmembrane segment at 168–184 (ILSLLLASPQLFIFRAI) threads the bilayer. Residues 185 to 210 (KAKGVDFVQCATHGSFQQHWQETAYN) are Extracellular-facing. Residues 211-230 (MFHFVTLYVFPLLVMSLCYT) traverse the membrane as a helical segment. At 231-283 (RILVEINRQMHRSKDKAGEPCLRRSGTDMIPKARMKTLKMTIIIVASFVICWT) the chain is on the cytoplasmic side. The helical transmembrane segment at 284-302 (PYYLLGIWYWFQPQMLHVI) threads the bilayer. Residues 303–308 (PDYVHH) lie on the Extracellular side of the membrane. Residues 309 to 328 (VFFVFGNLNTCCDPVIYGFF) form a helical membrane-spanning segment. Over 329 to 379 (TPSFRADLSRCFCWRNQNASAKSLPHFSGHRREVSGEAESDLGSGDQPSGQ) the chain is Cytoplasmic. Residues 355–379 (FSGHRREVSGEAESDLGSGDQPSGQ) form a disordered region.

The protein belongs to the G-protein coupled receptor 1 family. Post-translationally, phosphorylated on the C-terminal cytoplasmic tail.

The protein localises to the cell membrane. Receptor for gonadotropin releasing hormone II (GnRH II). This receptor mediates its action by association with G proteins that activate a phosphatidylinositol-calcium second messenger system. This is Gonadotropin-releasing hormone II receptor from Clarias gariepinus (North African catfish).